We begin with the raw amino-acid sequence, 396 residues long: Putative N(4)-(beta-N-acetylglucosaminyl)-L-asparaginase GE19290 (396 aa).

Residues 1-23 (MKRHLKACLWVLCFASTALSSLA) form the signal peptide. 2 cysteine pairs are disulfide-bonded: C100-C105 and C199-C215. Residue T246 is the Nucleophile of the active site. Residues 274–277 (RVGD) and 297–300 (TGDG) each bind substrate. C357 and C384 are joined by a disulfide.

It belongs to the Ntn-hydrolase family. Heterotetramer of two alpha and two beta chains arranged as a dimer of alpha/beta heterodimers. Cleaved into an alpha and beta chain by autocatalysis; this activates the enzyme. The N-terminal residue of the beta subunit is responsible for the nucleophile hydrolase activity.

It carries out the reaction N(4)-(beta-N-acetyl-D-glucosaminyl)-L-asparagine + H2O = N-acetyl-beta-D-glucosaminylamine + L-aspartate + H(+). In terms of biological role, cleaves the GlcNAc-Asn bond which joins oligosaccharides to the peptide of asparagine-linked glycoproteins. The chain is Putative N(4)-(beta-N-acetylglucosaminyl)-L-asparaginase GE19290 from Drosophila yakuba (Fruit fly).